The following is a 418-amino-acid chain: Tyrosine--tRNA ligase (418 aa).

Y34 contacts L-tyrosine. The short motif at 39–48 (PTADSLHLGH) is the 'HIGH' region element. L-tyrosine-binding residues include Y169 and Q173. Residues 229 to 233 (KFGKS) carry the 'KMSKS' region motif. K232 lines the ATP pocket. An S4 RNA-binding domain is found at 352–418 (NNIVELLVSS…GKKKYFVLTY (67 aa)).

The protein belongs to the class-I aminoacyl-tRNA synthetase family. TyrS type 1 subfamily. Homodimer.

Its subcellular location is the cytoplasm. The catalysed reaction is tRNA(Tyr) + L-tyrosine + ATP = L-tyrosyl-tRNA(Tyr) + AMP + diphosphate + H(+). Catalyzes the attachment of tyrosine to tRNA(Tyr) in a two-step reaction: tyrosine is first activated by ATP to form Tyr-AMP and then transferred to the acceptor end of tRNA(Tyr). In Streptococcus pneumoniae (strain 70585), this protein is Tyrosine--tRNA ligase.